The chain runs to 211 residues: MQLSLTQARTWKGLLLLVSCMILWISVTPTPYDQMSNEELYDNLLSCSHRTHVVARKMYKILDLNVAERRCFKNKRNNTCHTTSTHTAKTNEDLLKVIISVSNAWIYPLKMLIPAVLTHLGSYDGMMARAIELNYGNQKILEGAKFLLSRIQPGIEENDYPVWSSLKELRSSNKSIHLFAFCKFFYCLRKDTKKIKDYLQILRPNIIKNKW.

Residues 1-29 form the signal peptide; sequence MQLSLTQARTWKGLLLLVSCMILWISVTP. Asn-77 and Asn-173 each carry an N-linked (GlcNAc...) asparagine glycan. The cysteines at positions 80 and 187 are disulfide-linked.

It belongs to the somatotropin/prolactin family. As to expression, expressed exclusively in decidual tissue.

It is found in the secreted. The polypeptide is Prolactin-3C1 (Prl3c1) (Rattus norvegicus (Rat)).